The sequence spans 244 residues: UPF0246 protein FMG_1068 (244 aa).

The protein belongs to the UPF0246 family.

The protein is UPF0246 protein FMG_1068 of Finegoldia magna (strain ATCC 29328 / DSM 20472 / WAL 2508) (Peptostreptococcus magnus).